The following is a 280-amino-acid chain: Exfoliative toxin A (280 aa).

Residues Met-1–Ala-38 form the signal peptide. Active-site charge relay system residues include His-110, Asp-158, and Ser-233.

The protein belongs to the peptidase S1B family. The cofactor is Ca(2+).

In terms of biological role, has serine protease-like properties and binds to the skin protein profilaggrin. Cleaves substrates after acidic residues. Exfoliative toxins cause impetigous diseases commonly referred as staphylococcal scalded skin syndrome (SSSS). The chain is Exfoliative toxin A (eta) from Staphylococcus aureus.